A 504-amino-acid polypeptide reads, in one-letter code: Maturase K (504 aa).

This sequence belongs to the intron maturase 2 family. MatK subfamily.

It localises to the plastid. It is found in the chloroplast. Its function is as follows. Usually encoded in the trnK tRNA gene intron. Probably assists in splicing its own and other chloroplast group II introns. In Ochroma pyramidale (Balsa), this protein is Maturase K.